The sequence spans 443 residues: Large ribosomal subunit protein mL50 (443 aa).

Residues 121-145 (QPTRADAPEKIRDPNYEPATSGAGL) are disordered. Positions 126–135 (DAPEKIRDPN) are enriched in basic and acidic residues.

Belongs to the mitochondrion-specific ribosomal protein mL50 family. In terms of assembly, component of the mitochondrial large ribosomal subunit (mt-LSU). Mature N.crassa 74S mitochondrial ribosomes consist of a small (37S) and a large (54S) subunit. The 37S small subunit contains a 16S ribosomal RNA (16S mt-rRNA) and 32 different proteins. The 54S large subunit contains a 23S rRNA (23S mt-rRNA) and 42 different proteins.

The protein localises to the mitochondrion. Functionally, component of the mitochondrial ribosome (mitoribosome), a dedicated translation machinery responsible for the synthesis of mitochondrial genome-encoded proteins, including at least some of the essential transmembrane subunits of the mitochondrial respiratory chain. The mitoribosomes are attached to the mitochondrial inner membrane and translation products are cotranslationally integrated into the membrane. In Neurospora crassa (strain ATCC 24698 / 74-OR23-1A / CBS 708.71 / DSM 1257 / FGSC 987), this protein is Large ribosomal subunit protein mL50 (mrpl13).